A 1077-amino-acid chain; its full sequence is RNA polymerase-associated protein CTR9 (1077 aa).

TPR repeat units lie at residues 56–89 (KEHWLTIALAYCNHGKTNEGIKLIEMALDVFQNS), 138–174 (IGNMLATVELYYQRGHYDKALETSDLFVKSIHAEDHR), 183–216 (CLFLLLRAKLLYQKKNYMASLKIFQELLVINPVL), 218–251 (PDPRIGIGLCFWQLKDSKMAIKSWQRALQLNPKN), 298–332 (PVLLTLLQTYYYFKGDYQTVLDIYHHRILKMSPMI), 338–371 (SESSFWCGRAHYALGDYRKSFIMFQESLKKNEDN), 373–405 (LAKLGLGQTQIKNNLLEESIITFENLYKTNESL), 421–455 (FDAKTAKNTSAKEQSNLNEKALKYLERYLKLTLAT), 462–495 (SRAYLVISQLYELQNQYKTSLDYLSKALEEMEFI), 501–534 (LEVLNNLACYHFINGDFIKADDLFKQAKAKVSDK), 540–572 (ITLEYNIARTNEKNDCEKSESIYSQVTSLHPAY), 664–697 (GKKSRNPKEQEKSKHSYLKAIQLYQKVLQVDPFN), 699–731 (FAAQGLAIIFAESKRLGPALEILRKVRDSLDNE), 732–764 (DVQLNLAHCYLEMREYGKAIENYELVLKKFDNE), 768–801 (PHILNLLGRAWYARAIKERSVNFYQKALENAKTA), and 830–863 (AETLRRSNPKFRTVQQIKDSLEGLKEGLELFREL). Residues 959–980 (EREAMAISEHNVKDDSDLSDKD) are compositionally biased toward basic and acidic residues. Residues 959–1077 (EREAMAISEH…NDNDDNDGLF (119 aa)) form a disordered region. Phosphoserine occurs at positions 1015 and 1017. Composition is skewed to acidic residues over residues 1042 to 1051 (FIEDSDEEEA) and 1063 to 1077 (DNDENNDNDDNDGLF).

As to quaternary structure, component of the PAF1 complex which consists of at least CDC73, CTR9, LEO1, PAF1 and RTF1. Interacts with SPT6. Interacts with FACT subunits POB3 and SPT16.

It is found in the nucleus. The protein resides in the nucleoplasm. Its function is as follows. The PAF1 complex is a multifunctional complex. Involved in transcription initiation via genetic interactions with TATA-binding proteins. Involved in elongation. It regulates 3'-end formation of snR47 by modulating the recruitment or stable association of NRD1 and NAB3 with RNA polymerase II. Also has a role in transcription-coupled histone modification. Required for activation of RAD6 ubiquitin conjugate and the BRE1 ubiquitin ligase which ubiquitinate 'Lys-126' histone H2B. Activates the SET1 histone methyltransferase complex for methylation of 'Lys-4' of histone H3 and for methylation of 'Lys-73' of histone H3 by DOT1 and 'Lys-36' of histone H3 by SET2. In complex with PAF1, required for normal CLN1 and CLN2 G1 cyclin expression in late G1. Also has a role in chromosome segregation where it appears to be involved in microtubule placement. This chain is RNA polymerase-associated protein CTR9 (CTR9), found in Saccharomyces cerevisiae (strain ATCC 204508 / S288c) (Baker's yeast).